A 227-amino-acid chain; its full sequence is 7-cyano-7-deazaguanine synthase (227 aa).

8–18 serves as a coordination point for ATP; sequence LSGGTDSATVL. Residues Cys-192, Cys-202, Cys-205, and Cys-208 each contribute to the Zn(2+) site.

Belongs to the QueC family. Zn(2+) is required as a cofactor.

It carries out the reaction 7-carboxy-7-deazaguanine + NH4(+) + ATP = 7-cyano-7-deazaguanine + ADP + phosphate + H2O + H(+). The protein operates within purine metabolism; 7-cyano-7-deazaguanine biosynthesis. In terms of biological role, catalyzes the ATP-dependent conversion of 7-carboxy-7-deazaguanine (CDG) to 7-cyano-7-deazaguanine (preQ(0)). The protein is 7-cyano-7-deazaguanine synthase of Rickettsia prowazekii (strain Madrid E).